The following is a 298-amino-acid chain: Probable tRNA(His) guanylyltransferase (298 aa).

Mg(2+)-binding residues include Asp-58, Gly-59, and Asp-105. GTP contacts are provided by residues 58-63 (DGRNFH) and 104-105 (SD).

Belongs to the tRNA(His) guanylyltransferase family. Homotetramer. Interacts with MFN1 and MFN2; functions as a guanyl-nucleotide exchange factor/GEF for MFN2 and also probably MFN1. Mg(2+) serves as cofactor.

The protein resides in the cytoplasm. It is found in the mitochondrion. It carries out the reaction a 5'-end ribonucleotide-tRNA(His) + GTP + ATP + H2O = a 5'-end phospho-guanosine-ribonucleotide-tRNA(His) + AMP + 2 diphosphate + H(+). In terms of biological role, adds a GMP to the 5'-end of tRNA(His) after transcription and RNase P cleavage. This step is essential for proper recognition of the tRNA and for the fidelity of protein synthesis. Also functions as a guanyl-nucleotide exchange factor/GEF for the MFN1 and MFN2 mitofusins thereby regulating mitochondrial fusion. By regulating both mitochondrial dynamics and bioenergetic function, it contributes to cell survival following oxidative stress. This Mus musculus (Mouse) protein is Probable tRNA(His) guanylyltransferase (Thg1l).